We begin with the raw amino-acid sequence, 202 residues long: ATP-dependent Clp protease proteolytic subunit (202 aa).

The active-site Nucleophile is S107. H132 is a catalytic residue.

Belongs to the peptidase S14 family. As to quaternary structure, fourteen ClpP subunits assemble into 2 heptameric rings which stack back to back to give a disk-like structure with a central cavity, resembling the structure of eukaryotic proteasomes.

The protein localises to the cytoplasm. It catalyses the reaction Hydrolysis of proteins to small peptides in the presence of ATP and magnesium. alpha-casein is the usual test substrate. In the absence of ATP, only oligopeptides shorter than five residues are hydrolyzed (such as succinyl-Leu-Tyr-|-NHMec, and Leu-Tyr-Leu-|-Tyr-Trp, in which cleavage of the -Tyr-|-Leu- and -Tyr-|-Trp bonds also occurs).. Its function is as follows. Cleaves peptides in various proteins in a process that requires ATP hydrolysis. Has a chymotrypsin-like activity. Plays a major role in the degradation of misfolded proteins. The polypeptide is ATP-dependent Clp protease proteolytic subunit (Shewanella amazonensis (strain ATCC BAA-1098 / SB2B)).